A 213-amino-acid polypeptide reads, in one-letter code: uncharacterized protein (213 aa).

S-adenosyl-L-methionine-binding residues include Gly-53, Glu-74, and Asp-97.

This sequence belongs to the methyltransferase superfamily. YrrT family.

Its function is as follows. Could be a S-adenosyl-L-methionine-dependent methyltransferase. This is an uncharacterized protein from Geobacillus sp. (strain WCH70).